Reading from the N-terminus, the 136-residue chain is Small ribosomal subunit protein uS9 (136 aa).

Residues G95–R136 are disordered. The span at D99 to S116 shows a compositional bias: basic and acidic residues. Over residues K117–R136 the composition is skewed to basic residues.

Belongs to the universal ribosomal protein uS9 family.

The polypeptide is Small ribosomal subunit protein uS9 (Prochlorococcus marinus subsp. pastoris (strain CCMP1986 / NIES-2087 / MED4)).